The sequence spans 55 residues: Putative virulence-regulating protein PA2146 (55 aa).

The tract at residues 1–55 (MAQHQGGKGNFAEDPKRASEAGKKGGQASGGNFKNDPQRASEAGKKGGQRSHGGN) is disordered. 2 stretches are compositionally biased toward basic and acidic residues: residues 11-23 (FAED…EAGK) and 36-45 (DPQRASEAGK).

The protein belongs to the con-10 family.

In terms of biological role, may be involved in the regulation of the production of pyocyanine, one of the major virulence factors secreted by P.aeruginosa, and other virulence factors. This chain is Putative virulence-regulating protein PA2146, found in Pseudomonas aeruginosa (strain ATCC 15692 / DSM 22644 / CIP 104116 / JCM 14847 / LMG 12228 / 1C / PRS 101 / PAO1).